The chain runs to 163 residues: NADH-quinone oxidoreductase subunit I (163 aa).

4Fe-4S ferredoxin-type domains are found at residues 54 to 84 and 94 to 123; these read LRRY…IESD and TRYD…ETHI. [4Fe-4S] cluster contacts are provided by C64, C67, C70, C74, C103, C106, C109, and C113.

Belongs to the complex I 23 kDa subunit family. As to quaternary structure, NDH-1 is composed of 14 different subunits. Subunits NuoA, H, J, K, L, M, N constitute the membrane sector of the complex. [4Fe-4S] cluster is required as a cofactor.

The protein resides in the cell inner membrane. It carries out the reaction a quinone + NADH + 5 H(+)(in) = a quinol + NAD(+) + 4 H(+)(out). NDH-1 shuttles electrons from NADH, via FMN and iron-sulfur (Fe-S) centers, to quinones in the respiratory chain. The immediate electron acceptor for the enzyme in this species is believed to be ubiquinone. Couples the redox reaction to proton translocation (for every two electrons transferred, four hydrogen ions are translocated across the cytoplasmic membrane), and thus conserves the redox energy in a proton gradient. The polypeptide is NADH-quinone oxidoreductase subunit I (Ralstonia nicotianae (strain ATCC BAA-1114 / GMI1000) (Ralstonia solanacearum)).